Reading from the N-terminus, the 503-residue chain is Basic immunoglobulin-like variable motif-containing protein (503 aa).

A compositionally biased stretch (basic and acidic residues) spans 1 to 26; it reads MPNVAETERSNDSGNGEHKSERKSPE. 3 disordered regions span residues 1-33, 152-184, and 438-469; these read MPNV…QGAV, TTNS…ECPQ, and ESQP…GRSF. Basic residues predominate over residues 155 to 172; the sequence is SKHKSGNAKKQVSKRKTS. Positions 173 to 184 are enriched in basic and acidic residues; sequence DKKGRYQKECPQ.

It belongs to the BIVM family. Widely expressed. Expressed at higher level in spleen, ovary, small intestine, colon, peripheral blood leukocytes and liver. Also expressed in testis, ovary, aorta, appendix, trachea, pituitary gland, bladder, uterus, spinal cord, salivary gland, stomach, mammary gland and bone marrow. Weakly or not expressed in fetal spleen, adult thymus and certain cancer cell lines.

The protein resides in the cytoplasm. It is found in the nucleus. In Homo sapiens (Human), this protein is Basic immunoglobulin-like variable motif-containing protein (BIVM).